The sequence spans 435 residues: 5-methylthioadenosine/S-adenosylhomocysteine deaminase (435 aa).

2 residues coordinate Zn(2+): His-65 and His-67. 3 residues coordinate substrate: Glu-94, Arg-150, and His-189. His-216 contacts Zn(2+). Substrate contacts are provided by Glu-219 and Asp-304. A Zn(2+)-binding site is contributed by Asp-304.

The protein belongs to the metallo-dependent hydrolases superfamily. MTA/SAH deaminase family. It depends on Zn(2+) as a cofactor.

It carries out the reaction S-adenosyl-L-homocysteine + H2O + H(+) = S-inosyl-L-homocysteine + NH4(+). It catalyses the reaction S-methyl-5'-thioadenosine + H2O + H(+) = S-methyl-5'-thioinosine + NH4(+). Functionally, catalyzes the deamination of 5-methylthioadenosine and S-adenosyl-L-homocysteine into 5-methylthioinosine and S-inosyl-L-homocysteine, respectively. Is also able to deaminate adenosine. The polypeptide is 5-methylthioadenosine/S-adenosylhomocysteine deaminase (Bacillus cereus (strain ATCC 14579 / DSM 31 / CCUG 7414 / JCM 2152 / NBRC 15305 / NCIMB 9373 / NCTC 2599 / NRRL B-3711)).